The following is a 95-amino-acid chain: MKICGPKLSLCGLIISVWGIIQLVLMGLFFYINSVALIEDLPIDEEFNSVEEFYTAATSAYNQNAYNCWIAACIYVLTLLLSAQQFYVNSRATAN.

The next 2 helical transmembrane spans lie at 12 to 32 (GLII…FFYI) and 68 to 88 (CWIA…QFYV).

Belongs to the RNase K family.

The protein resides in the membrane. With respect to regulation, inhibited by Zn(2+) and Hg(2+), while it is unaffected by Ca(2+). In terms of biological role, endoribonuclease which displays activity against poly(C) and poly(U) synthetic substrates, as well as rRNA. This chain is Ribonuclease kappa-B, found in Ceratitis capitata (Mediterranean fruit fly).